Here is a 559-residue protein sequence, read N- to C-terminus: Dihydroxy-acid dehydratase (559 aa).

Residue Asp-80 participates in Mg(2+) binding. Cys-121 is a [2Fe-2S] cluster binding site. The Mg(2+) site is built by Asp-122 and Lys-123. N6-carboxylysine is present on Lys-123. Cys-194 contributes to the [2Fe-2S] cluster binding site. Position 447 (Glu-447) interacts with Mg(2+). Ser-473 acts as the Proton acceptor in catalysis.

This sequence belongs to the IlvD/Edd family. As to quaternary structure, homodimer. [2Fe-2S] cluster serves as cofactor. The cofactor is Mg(2+).

The enzyme catalyses (2R)-2,3-dihydroxy-3-methylbutanoate = 3-methyl-2-oxobutanoate + H2O. The catalysed reaction is (2R,3R)-2,3-dihydroxy-3-methylpentanoate = (S)-3-methyl-2-oxopentanoate + H2O. Its pathway is amino-acid biosynthesis; L-isoleucine biosynthesis; L-isoleucine from 2-oxobutanoate: step 3/4. It participates in amino-acid biosynthesis; L-valine biosynthesis; L-valine from pyruvate: step 3/4. Its function is as follows. Functions in the biosynthesis of branched-chain amino acids. Catalyzes the dehydration of (2R,3R)-2,3-dihydroxy-3-methylpentanoate (2,3-dihydroxy-3-methylvalerate) into 2-oxo-3-methylpentanoate (2-oxo-3-methylvalerate) and of (2R)-2,3-dihydroxy-3-methylbutanoate (2,3-dihydroxyisovalerate) into 2-oxo-3-methylbutanoate (2-oxoisovalerate), the penultimate precursor to L-isoleucine and L-valine, respectively. This chain is Dihydroxy-acid dehydratase, found in Chlorobium chlorochromatii (strain CaD3).